A 65-amino-acid chain; its full sequence is Large ribosomal subunit protein bL35 (65 aa).

A disordered region spans residues M1–D51. Residues H31–L44 show a composition bias toward basic residues.

It belongs to the bacterial ribosomal protein bL35 family.

The sequence is that of Large ribosomal subunit protein bL35 from Pediococcus pentosaceus (strain ATCC 25745 / CCUG 21536 / LMG 10740 / 183-1w).